We begin with the raw amino-acid sequence, 397 residues long: Bifunctional arginine demethylase and lysyl-hydroxylase psr-1 (397 aa).

The JmjC domain maps to 146 to 310 (RKTKKLSEDY…LVWPKTVRGR (165 aa)). T189 serves as a coordination point for substrate. Fe cation-binding residues include H192 and D194. A 2-oxoglutarate-binding site is contributed by N202. Residue K209 participates in substrate binding. H278 provides a ligand contact to Fe cation. Position 290 (T290) interacts with 2-oxoglutarate. Positions 334-344 (SCTDTPPQSLN) are enriched in polar residues. Positions 334-383 (SCTDTPPQSLNDSSSDSSSSSSSSDDSSDSETEEDSGRCGLGNRKRRNDV) are disordered. The span at 345–358 (DSSSDSSSSSSSSD) shows a compositional bias: low complexity.

It belongs to the JMJD6 family. As to quaternary structure, interacts with ced-5 and ced-12. Requires Fe(2+) as cofactor.

The protein localises to the nucleus. Its function is as follows. Dioxygenase that can both act as a histone arginine demethylase and a lysyl-hydroxylase. The sequence is that of Bifunctional arginine demethylase and lysyl-hydroxylase psr-1 (psr-1) from Caenorhabditis briggsae.